The sequence spans 591 residues: L-fucose isomerase (591 aa).

Catalysis depends on proton acceptor residues Glu-337 and Asp-361. 3 residues coordinate Mn(2+): Glu-337, Asp-361, and His-528.

Belongs to the L-fucose isomerase family. As to quaternary structure, homohexamer. Mn(2+) is required as a cofactor.

The protein localises to the cytoplasm. The catalysed reaction is L-fucose = L-fuculose. The protein operates within carbohydrate degradation; L-fucose degradation; L-lactaldehyde and glycerone phosphate from L-fucose: step 1/3. Functionally, converts the aldose L-fucose into the corresponding ketose L-fuculose. This is L-fucose isomerase from Escherichia coli O17:K52:H18 (strain UMN026 / ExPEC).